We begin with the raw amino-acid sequence, 129 residues long: Small ribosomal subunit protein uS11 (129 aa).

The protein belongs to the universal ribosomal protein uS11 family. Part of the 30S ribosomal subunit. Interacts with proteins S7 and S18. Binds to IF-3.

In terms of biological role, located on the platform of the 30S subunit, it bridges several disparate RNA helices of the 16S rRNA. Forms part of the Shine-Dalgarno cleft in the 70S ribosome. This chain is Small ribosomal subunit protein uS11, found in Azobacteroides pseudotrichonymphae genomovar. CFP2.